A 277-amino-acid polypeptide reads, in one-letter code: Energy-coupling factor transporter ATP-binding protein EcfA1 (277 aa).

The ABC transporter domain occupies 5 to 242; sequence VKVNNISFEY…IKMLKEIGLD (238 aa). Position 41–48 (41–48) interacts with ATP; it reads GHNGSGKS.

Belongs to the ABC transporter superfamily. Energy-coupling factor EcfA family. As to quaternary structure, forms a stable energy-coupling factor (ECF) transporter complex composed of 2 membrane-embedded substrate-binding proteins (S component), 2 ATP-binding proteins (A component) and 2 transmembrane proteins (T component).

It is found in the cell membrane. In terms of biological role, ATP-binding (A) component of a common energy-coupling factor (ECF) ABC-transporter complex. Unlike classic ABC transporters this ECF transporter provides the energy necessary to transport a number of different substrates. The chain is Energy-coupling factor transporter ATP-binding protein EcfA1 from Clostridioides difficile (strain 630) (Peptoclostridium difficile).